The following is a 1893-amino-acid chain: CDK5 regulatory subunit-associated protein 2 (1893 aa).

The segment at 51–94 (TVSPTRARNMKDFENQITELKKENFNLKLRIYFLEERMQQEFHG) is CM1 motif; interacts with the gTuRC. The tract at residues 58 to 196 (RNMKDFENQI…TEKALRLRLE (139 aa)) is interaction with NCKAP5L. Serine 547 bears the Phosphoserine mark. The segment at 926 to 1208 (PGVTNREAKK…LENLKQQLEE (283 aa)) is interaction with MAPRE1. A Phosphothreonine modification is found at threonine 1001. The tract at residues 1015–1071 (AAYQDSPGEQKGIKTTSSVWRDKEMDSDQQTSYEIDSEICPPDDLASLPSCKENPED) is disordered. The segment at 1196–1893 (SRVLENLKQQ…GTCSPSRPGS (698 aa)) is interaction with PCNT and AKAP9. Serine 1238 is modified (phosphoserine). Disordered stretches follow at residues 1347–1381 (LPESPEPSASHALSDYETSEKSFFSQDQKQDNETE) and 1467–1486 (IKGSRDKQKENDKLRESLSR). A compositionally biased stretch (basic and acidic residues) spans 1469–1486 (GSRDKQKENDKLRESLSR). At serine 1490 the chain carries Phosphoserine. Positions 1500–1519 (SVKEENERLQKEGSEKERHN) are enriched in basic and acidic residues. Positions 1500–1521 (SVKEENERLQKEGSEKERHNQQ) are disordered. Phosphoserine occurs at positions 1663 and 1666. Disordered stretches follow at residues 1675–1706 (AVTPKSVSETPPLSGNDTDSLSCDSGSSATST) and 1752–1774 (DVQTQEAPSSTSQELGTKGPHPA). The tract at residues 1726 to 1768 (HVLGLIEDYEALLKQISQGQRLLAEMDVQTQEAPSSTSQELGT) is interaction with CDK5R1. The span at 1753 to 1766 (VQTQEAPSSTSQEL) shows a compositional bias: polar residues. Positions 1861–1870 (VVTHKILRKA) are required for centrosomal attachment, Golgi localization and CALM1 interaction. Residues 1874 to 1893 (LELRPGGSHPGTCSPSRPGS) form a disordered region. Residues 1884 to 1893 (GTCSPSRPGS) are compositionally biased toward polar residues. Serine 1893 bears the Phosphoserine mark.

As to quaternary structure, homodimer. Interacts with CDK5R1 (p35 form). CDK5RAP1, CDK5RAP2 and CDK5RAP3 show competitive binding to CDK5R1. May form a complex with CDK5R1 and CDK5. Interacts with pericentrin/PCNT; the interaction is leading to centrosomal and Golgi localization of CDK5RAP2 and PCNT. Interacts with AKAP9; the interaction targets CDK5RAP2 and AKAP9 to Golgi apparatus. Interacts with MAPRE1; the interaction is direct and targets CDK5RAP2 and EB1/MAPRE1 to microtubule plus ends. Interacts with TUBG1; the interaction is leading to the centrosomal localization of CDK5RAP2 and TUBG1. Interacts with TUBGCP3. Interacts with CALM1. Interacts with CDC20. Interacts with CEP68; degradation of CEP68 in early mitosis leads to removal of CDK5RAP2 from the centrosome which promotes centriole disengagement and subsequent centriole separation. Interacts with NCKAP5L. Forms a pericentrosomal complex with AKAP9, MAPRE1 and PDE4DIP isoform 13/MMG8/SMYLE; within this complex, MAPRE1 binding to CDK5RAP2 may be mediated by PDE4DIP. Interacts with LGALS3BP; this interaction may connect the pericentrosomal complex to the gamma-tubulin ring complex (gTuRC) to promote microtubule assembly and acetylation. Interacts with CCDC66. Associates (via CM1 motif) with TUBGCP2 of the gTuRC; the interaction plays a role in gTuRC activation. Post-translationally, phosphorylated in vitro by CDK5.

It is found in the cytoplasm. The protein localises to the cytoskeleton. The protein resides in the microtubule organizing center. Its subcellular location is the centrosome. It localises to the golgi apparatus. In terms of biological role, potential regulator of CDK5 activity via its interaction with CDK5R1. Negative regulator of centriole disengagement (licensing) which maintains centriole engagement and cohesion. Involved in regulation of mitotic spindle orientation. Plays a role in the spindle checkpoint activation by acting as a transcriptional regulator of both BUBR1 and MAD2 promoter. Together with EB1/MAPRE1, may promote microtubule polymerization, bundle formation, growth and dynamics at the plus ends. Regulates centrosomal maturation by recruitment of the gamma-tubulin ring complex (gTuRC) onto centrosomes. In complex with PDE4DIP isoform 13/MMG8/SMYLE, MAPRE1 and AKAP9, contributes to microtubules nucleation and extension from the centrosome to the cell periphery. Required for the recruitment of AKAP9 to centrosomes. Plays a role in neurogenesis. In Pan troglodytes (Chimpanzee), this protein is CDK5 regulatory subunit-associated protein 2 (CDK5RAP2).